Reading from the N-terminus, the 1164-residue chain is DNA-directed RNA polymerase subunit beta (1164 aa).

Disordered stretches follow at residues 975 to 994 and 1143 to 1164; these read RSSL…GKSN and ANAA…MDVS. Composition is skewed to basic and acidic residues over residues 981–991 and 1152–1164; these read RDGERQVDDFG and SRDE…MDVS.

This sequence belongs to the RNA polymerase beta chain family. In terms of assembly, the RNAP catalytic core consists of 2 alpha, 1 beta, 1 beta' and 1 omega subunit. When a sigma factor is associated with the core the holoenzyme is formed, which can initiate transcription.

It carries out the reaction RNA(n) + a ribonucleoside 5'-triphosphate = RNA(n+1) + diphosphate. In terms of biological role, DNA-dependent RNA polymerase catalyzes the transcription of DNA into RNA using the four ribonucleoside triphosphates as substrates. This is DNA-directed RNA polymerase subunit beta from Corynebacterium jeikeium (strain K411).